Consider the following 597-residue polypeptide: uncharacterized protein (597 aa).

Disordered regions lie at residues 165-197 (NSRAVPPPAPPNPPKMEKHMSHDTSGRGSIFSK) and 278-344 (ERSS…RGTL). The span at 169 to 178 (VPPPAPPNPP) shows a compositional bias: pro residues. Over residues 179–189 (KMEKHMSHDTS) the composition is skewed to basic and acidic residues. A compositionally biased stretch (low complexity) spans 293–313 (STEVSITSSSPSPSSSSSTST). The 64-residue stretch at 402–465 (WSLDDVLLWL…LDDLSKIIEN (64 aa)) folds into the SAM domain. Residues 576 to 597 (EESQQKESSSSGISSSPQTPTE) form a disordered region. Over residues 581 to 597 (KESSSSGISSSPQTPTE) the composition is skewed to low complexity.

This is an uncharacterized protein from Caenorhabditis elegans.